The following is a 499-amino-acid chain: UDP-N-acetylmuramoyl-L-alanyl-D-glutamate--2,6-diaminopimelate ligase (499 aa).

Position 32 (Ser-32) interacts with UDP-N-acetyl-alpha-D-muramoyl-L-alanyl-D-glutamate. 117–123 (GTNGKTT) serves as a coordination point for ATP. UDP-N-acetyl-alpha-D-muramoyl-L-alanyl-D-glutamate is bound by residues 159 to 160 (TT), Ser-186, Gln-192, and Arg-194. Position 226 is an N6-carboxylysine (Lys-226). Residues Arg-394, 418-421 (DNPR), Gly-469, and Glu-473 contribute to the meso-2,6-diaminopimelate site. The Meso-diaminopimelate recognition motif motif lies at 418-421 (DNPR).

This sequence belongs to the MurCDEF family. MurE subfamily. It depends on Mg(2+) as a cofactor. In terms of processing, carboxylation is probably crucial for Mg(2+) binding and, consequently, for the gamma-phosphate positioning of ATP.

Its subcellular location is the cytoplasm. The enzyme catalyses UDP-N-acetyl-alpha-D-muramoyl-L-alanyl-D-glutamate + meso-2,6-diaminopimelate + ATP = UDP-N-acetyl-alpha-D-muramoyl-L-alanyl-gamma-D-glutamyl-meso-2,6-diaminopimelate + ADP + phosphate + H(+). The protein operates within cell wall biogenesis; peptidoglycan biosynthesis. Catalyzes the addition of meso-diaminopimelic acid to the nucleotide precursor UDP-N-acetylmuramoyl-L-alanyl-D-glutamate (UMAG) in the biosynthesis of bacterial cell-wall peptidoglycan. This Synechococcus sp. (strain WH7803) protein is UDP-N-acetylmuramoyl-L-alanyl-D-glutamate--2,6-diaminopimelate ligase.